A 133-amino-acid chain; its full sequence is Small ribosomal subunit protein uS8 (133 aa).

It belongs to the universal ribosomal protein uS8 family. As to quaternary structure, part of the 30S ribosomal subunit.

In terms of biological role, one of the primary rRNA binding proteins, it binds directly to 16S rRNA central domain where it helps coordinate assembly of the platform of the 30S subunit. This Staphylothermus marinus (strain ATCC 43588 / DSM 3639 / JCM 9404 / F1) protein is Small ribosomal subunit protein uS8.